The sequence spans 614 residues: Kelch-like protein 40 (614 aa).

Residues 33–100 (IDCVLKIQGK…IYTSEIEITE (68 aa)) enclose the BTB domain. The BACK domain maps to 135 to 237 (CLAIFRLGLL…PQDYIKNKVE (103 aa)). Kelch repeat units follow at residues 353–405 (QLFV…ESDN), 406–455 (SIYL…SHDN), 456–503 (LVYV…VHKG), 505–550 (ILIA…SMNG), and 552–606 (LYAI…AARL).

It belongs to the KLHL40 family. As to quaternary structure, component of the BCR(KLHL40) E3 ubiquitin ligase complex.

Its subcellular location is the cytoplasm. The protein resides in the myofibril. It localises to the sarcomere. The protein localises to the a band. It is found in the i band. Its function is as follows. Substrate-specific adapter of a BCR (BTB-CUL3-RBX1) E3 ubiquitin ligase complex that acts as a key regulator of skeletal muscle development. This Xenopus tropicalis (Western clawed frog) protein is Kelch-like protein 40 (klhl40).